The primary structure comprises 347 residues: GTPase Obg (347 aa).

An Obg domain is found at 1–159 (MKFVDEATIK…RVLRLELKLL (159 aa)). The tract at residues 127 to 146 (NTRYKTSTNRAPRQSKPGTP) is disordered. Residues 129–138 (RYKTSTNRAP) are compositionally biased toward polar residues. Residues 160 to 334 (ADVGLLGLPN…LMQAIMKYLE (175 aa)) enclose the OBG-type G domain. GTP contacts are provided by residues 166–173 (GLPNAGKS), 191–195 (FTTLY), 213–216 (DIPG), 284–287 (NKID), and 315–317 (SAA). Positions 173 and 193 each coordinate Mg(2+).

Belongs to the TRAFAC class OBG-HflX-like GTPase superfamily. OBG GTPase family. Monomer. Mg(2+) is required as a cofactor.

It localises to the cytoplasm. Functionally, an essential GTPase which binds GTP, GDP and possibly (p)ppGpp with moderate affinity, with high nucleotide exchange rates and a fairly low GTP hydrolysis rate. Plays a role in control of the cell cycle, stress response, ribosome biogenesis and in those bacteria that undergo differentiation, in morphogenesis control. The sequence is that of GTPase Obg from Thioalkalivibrio sulfidiphilus (strain HL-EbGR7).